The sequence spans 1093 residues: Isoleucine--tRNA ligase, chloroplastic/mitochondrial (1093 aa).

The interval 69–103 (PNNEFGHSSKRRSRGPVMAAKKASEGEKQEDGKYK) is disordered. The segment covering 90–103 (KASEGEKQEDGKYK) has biased composition (basic and acidic residues). The 'HIGH' region signature appears at 155-165 (PYANGDLHMGH). Glu-682 serves as a coordination point for L-isoleucyl-5'-AMP. Residues 723–727 (KMSKS) carry the 'KMSKS' region motif. Lys-726 is an ATP binding site. Zn(2+) contacts are provided by Cys-1050, Cys-1053, Cys-1070, and Cys-1073.

The protein belongs to the class-I aminoacyl-tRNA synthetase family.

It is found in the plastid. Its subcellular location is the chloroplast. The protein localises to the mitochondrion. The catalysed reaction is tRNA(Ile) + L-isoleucine + ATP = L-isoleucyl-tRNA(Ile) + AMP + diphosphate. This chain is Isoleucine--tRNA ligase, chloroplastic/mitochondrial, found in Arabidopsis thaliana (Mouse-ear cress).